Here is a 589-residue protein sequence, read N- to C-terminus: Actin-histidine N-methyltransferase (589 aa).

The segment at 1-22 is disordered; it reads MGKKSRVKTQKSGTGATATVSP. Residues 10 to 20 are compositionally biased toward polar residues; sequence QKSGTGATATV. Residues R75, 104–106, R254, 275–279, and 325–327 contribute to the S-adenosyl-L-methionine site; these read EGF, DMCNH, and SGF. Residues 94–314 form the SET domain; it reads EGFEMVNFKE…AGEQIYIFYG (221 aa). S513 is subject to Phosphoserine. The tract at residues 547–589 is disordered; sequence LVNGERSFPNGTRSEEDLKQEERKRAKGDAKESSSDSTDAVKE. A compositionally biased stretch (basic and acidic residues) spans 559–589; that stretch reads RSEEDLKQEERKRAKGDAKESSSDSTDAVKE.

Belongs to the class V-like SAM-binding methyltransferase superfamily. SETD3 actin-histidine methyltransferase family. Interacts with MYOD1. Phosphorylated by GSK3B, which is required for recognition by the SCF(FBXW7) complex and subsequent degradation. Post-translationally, ubiquitinated by the SCF(FBXW7) complex following phosphorylation by GSK3B, leading to its degradation by the proteasome.

Its subcellular location is the cytoplasm. It is found in the nucleus. It catalyses the reaction L-histidyl-[protein] + S-adenosyl-L-methionine = N(tele)-methyl-L-histidyl-[protein] + S-adenosyl-L-homocysteine + H(+). In terms of biological role, protein-histidine N-methyltransferase that specifically mediates 3-methylhistidine (tele-methylhistidine) methylation of actin at 'His-73'. Histidine methylation of actin is required for smooth muscle contraction of the laboring uterus during delivery. Does not have protein-lysine N-methyltransferase activity and probably only catalyzes histidine methylation of actin. The sequence is that of Actin-histidine N-methyltransferase from Dasypus novemcinctus (Nine-banded armadillo).